Reading from the N-terminus, the 154-residue chain is Large-conductance mechanosensitive channel (154 aa).

2 helical membrane-spanning segments follow: residues 12–32 (GNIV…ALIT) and 71–91 (IVLS…FLVV). Positions 129–154 (NGAPSGRHVDTADLTPTPNHEPRADT) are disordered.

Belongs to the MscL family. As to quaternary structure, homopentamer.

It localises to the cell membrane. In terms of biological role, channel that opens in response to stretch forces in the membrane lipid bilayer. May participate in the regulation of osmotic pressure changes within the cell. The chain is Large-conductance mechanosensitive channel from Mycobacterium leprae (strain Br4923).